A 697-amino-acid polypeptide reads, in one-letter code: Hormonally up-regulated neu tumor-associated kinase homolog (697 aa).

The region spanning 55–313 (YLIGRKLGEG…IQQALANRWL (259 aa)) is the Protein kinase domain. Residues 61–69 (LGEGSFAKV) and lysine 84 each bind ATP. Aspartate 179 acts as the Proton acceptor in catalysis. 2 stretches are compositionally biased toward basic and acidic residues: residues 405–424 (KMNK…KRGE) and 460–473 (PVKE…ERES). 2 disordered regions span residues 405 to 480 (KMNK…LSPF) and 586 to 642 (DNTS…NCVR). The span at 586 to 600 (DNTSPIKGHSNQASF) shows a compositional bias: polar residues. The segment covering 607–626 (SPSSPESMSPTSPHSPHSPS) has biased composition (low complexity). The span at 627–637 (CNNNISGNLGS) shows a compositional bias: polar residues.

This sequence belongs to the protein kinase superfamily. CAMK Ser/Thr protein kinase family. SNF1 subfamily.

It carries out the reaction L-seryl-[protein] + ATP = O-phospho-L-seryl-[protein] + ADP + H(+). It catalyses the reaction L-threonyl-[protein] + ATP = O-phospho-L-threonyl-[protein] + ADP + H(+). The chain is Hormonally up-regulated neu tumor-associated kinase homolog (hunk) from Xenopus tropicalis (Western clawed frog).